We begin with the raw amino-acid sequence, 121 residues long: Non-specific lipid-transfer protein 3 (121 aa).

Residues 1–28 (MAGARRTMALVALVAVVAAAVVAERASA) form the signal peptide. Cystine bridges form between cysteine 32/cysteine 80, cysteine 42/cysteine 57, cysteine 58/cysteine 103, and cysteine 78/cysteine 117.

Belongs to the plant LTP family.

In terms of biological role, plant non-specific lipid-transfer proteins transfer phospholipids as well as galactolipids across membranes. May play a role in wax or cutin deposition in the cell walls of expanding epidermal cells and certain secretory tissues. May possess an antifungal activity and protect the plant against pathogens. The sequence is that of Non-specific lipid-transfer protein 3 (LTP110-A) from Oryza sativa subsp. indica (Rice).